Consider the following 290-residue polypeptide: 33 kDa chaperonin (290 aa).

2 cysteine pairs are disulfide-bonded: Cys-235–Cys-237 and Cys-268–Cys-271.

It belongs to the HSP33 family. In terms of processing, under oxidizing conditions two disulfide bonds are formed involving the reactive cysteines. Under reducing conditions zinc is bound to the reactive cysteines and the protein is inactive.

It localises to the cytoplasm. Its function is as follows. Redox regulated molecular chaperone. Protects both thermally unfolding and oxidatively damaged proteins from irreversible aggregation. Plays an important role in the bacterial defense system toward oxidative stress. In Streptococcus pneumoniae (strain JJA), this protein is 33 kDa chaperonin.